The chain runs to 762 residues: Chondroadherin-like protein (762 aa).

An N-terminal signal peptide occupies residues 1-30; that stretch reads MEGPRSSTHVPLVLPLLVLLLLAPARQAAA. Residues 31–62 form the LRRNT 1 domain; sequence QRCPQACICDNSRRHVACRYQNLTEVPDAIPE. Asparagine 52 carries N-linked (GlcNAc...) asparagine glycosylation. LRR repeat units follow at residues 87-108, 111-132, 135-156, 159-180, 183-204, 207-228, 231-252, 255-276, and 279-300; these read HLTHLDLRHCEVELVAEGAFRG, RLLLLNLASNHLRELPQEALDG, SLRRLELEGNALEELRPGTFGA, ALATLNLAHNALVYLPAMAFQG, RVRWLRLSHNALSVLAPEALAG, ALRRLSLHHNELQALPGPVLSQ, GLARLELGHNPLTYAGEEDGLA, GLRELLLDGGALQALGPRAFAH, and RLHTLDLRGNQLDTLPPLQGPG. An LRRCT 1 domain is found at 310–359; that stretch reads NPLWCGCQARPLLEWLARARVRSDGACQGPRRLRGEALDALRPWDLRCPG. The disordered stretch occupies residues 364–390; that stretch reads EEEELEERAVAGPRAPPRGPPRGPGEE. A compositionally biased stretch (pro residues) spans 377–386; sequence RAPPRGPPRG. The LRRNT 2 domain occupies 387 to 425; it reads PGEERAVAPCPRACVCVPESRHSSCEGCGLQAVPRGFPS. A disulfide bridge links cysteine 396 with cysteine 411. 10 LRR repeats span residues 426–447, 450–471, 474–495, 498–519, 522–543, 546–566, 570–591, 594–615, 619–640, and 644–665; these read DTQLLDLRRNHFPSVPRAAFPG, HLVSLHLQHCGIAELEAGALAG, RLIYLYLSDNQLAGLSAAALEG, RLGYLYLERNRFLQVPGAALRA, SLFSLHLQDNAVDRLAPGDLGR, ALRWVYLSGNRITEVSLGALG, ELEKLHLDRNQLREVPTGALEG, ALLELQLSGNPLRALRDGAFQP, SLQHLFLNSSGLEQICPGAFSG, and GLQSLHLQKNQLRALPALPSLS. The N-linked (GlcNAc...) asparagine glycan is linked to asparagine 626. The 50-residue stretch at 675–724 folds into the LRRCT 2 domain; it reads NPFHCDCQLLPLHRWLTGLNLRVGATCATPPNARGQRVKAAAAVFEDCPG. 2 cysteine pairs are disulfide-bonded: cysteine 679/cysteine 722 and cysteine 681/cysteine 701. Basic residues predominate over residues 728–745; sequence RKAKRTPASRPSARRTPI. The segment at 728 to 762 is disordered; sequence RKAKRTPASRPSARRTPIKGRQCGADKVGKEKGRL.

This sequence belongs to the small leucine-rich proteoglycan (SLRP) family. SLRP class IV subfamily. Associates with collagen and binds to collagen fibrils.

The protein resides in the secreted. The protein localises to the extracellular space. It localises to the extracellular matrix. In terms of biological role, potential negative modulator of chondrocyte differentiation. Inhibits collagen fibrillogenesis in vitro. May influence chondrocyte's differentiation by acting on its cellular collagenous microenvironment. The sequence is that of Chondroadherin-like protein (CHADL) from Homo sapiens (Human).